Here is a 491-residue protein sequence, read N- to C-terminus: Cobyric acid synthase (491 aa).

Residues K246–F435 enclose the GATase cobBQ-type domain. The Nucleophile role is filled by C327. H427 is a catalytic residue.

The protein belongs to the CobB/CobQ family. CobQ subfamily.

Its pathway is cofactor biosynthesis; adenosylcobalamin biosynthesis. Catalyzes amidations at positions B, D, E, and G on adenosylcobyrinic A,C-diamide. NH(2) groups are provided by glutamine, and one molecule of ATP is hydrogenolyzed for each amidation. The polypeptide is Cobyric acid synthase (Clostridium acetobutylicum (strain ATCC 824 / DSM 792 / JCM 1419 / IAM 19013 / LMG 5710 / NBRC 13948 / NRRL B-527 / VKM B-1787 / 2291 / W)).